The chain runs to 343 residues: Dihydroorotate dehydrogenase (quinone) (343 aa).

Residues 65–69 (AGFDK) and Thr89 contribute to the FMN site. Position 69 (Lys69) interacts with substrate. Residue 114 to 118 (NRMGF) coordinates substrate. FMN is bound by residues Asn145 and Asn178. Asn178 lines the substrate pocket. Ser181 functions as the Nucleophile in the catalytic mechanism. Substrate is bound at residue Asn183. FMN-binding residues include Lys215 and Thr243. 244-245 (NT) contributes to the substrate binding site. Residues Gly269, Gly298, and 319-320 (YT) each bind FMN.

It belongs to the dihydroorotate dehydrogenase family. Type 2 subfamily. As to quaternary structure, monomer. FMN serves as cofactor.

Its subcellular location is the cell membrane. It carries out the reaction (S)-dihydroorotate + a quinone = orotate + a quinol. It participates in pyrimidine metabolism; UMP biosynthesis via de novo pathway; orotate from (S)-dihydroorotate (quinone route): step 1/1. Functionally, catalyzes the conversion of dihydroorotate to orotate with quinone as electron acceptor. This is Dihydroorotate dehydrogenase (quinone) from Leifsonia xyli subsp. xyli (strain CTCB07).